The sequence spans 613 residues: Carotenoid dioxygenase (613 aa).

The tract at residues 1 to 25 (MSPHEVIGTVPKNSTTFRTQADEHD) is disordered. Fe(2+) is bound by residues H261, H313, H383, and H595.

This sequence belongs to the carotenoid oxygenase family. The cofactor is Fe(2+).

The protein localises to the cytoplasm. The protein resides in the cytosol. It carries out the reaction torulene + O2 = 4'-apo-beta-carotenal + 3-methyl-2-butenal. The protein operates within carotenoid biosynthesis. Functionally, torulene dioxygenase; part of pathway that mediates the biosynthesis of neurosporaxanthin, a carboxylic apocarotenoid acting as an essential protective pigments and leading to orange pigmentation. Cao-2 mediates the cleavage of torulene into beta-apo-4'-carotenal, the aldehyde corresponding to the acidic neurosporaxanthin. Is not able to use gamma-carotene (that it is not desaturated at the C4'-C5' bond) as substrate, which suggests a high specificity of cao-2 in cleaving the C4'-C5' double bond. Neurosporaxanthin is synthesized from geranyl-geranyl pyrophosphate (GGPP) through several enzymatic activities. Phytoene synthase activity performed by the bifunctional enzyme al-2 first produces phytoene from geranyl-geranyl pyrophosphate (GGPP). The phytoene dehydrogenase al-1 then introduces 5 desaturations to lead to 3,4-didehydrolycopene via the intermediates phytofluene, zeta-carotene, neurosporene and lycopene. Al-2 cyclase activity then converts 3,4-didehydrolycopene into torulene. Al-2 can also convet lycopene into gamma-carotene which in turn is converted to beta-carotene by an additional al-2 cyclization reaction. Torulene is the substrate of the dioxidase cao-2 that breaks the molecule, removing five carbon atoms to yield beta-apo-4'-carotenal, whereas the aldehyde dehydrogenase ylo-1 mediates the last step by converting beta-apo-4'-carotenal into neurosporaxanthin. In Neurospora crassa (strain ATCC 24698 / 74-OR23-1A / CBS 708.71 / DSM 1257 / FGSC 987), this protein is Carotenoid dioxygenase.